The chain runs to 66 residues: Heat-stable enterotoxin (66 aa).

A signal peptide spans Met-1–Gly-19. A propeptide spanning residues Gln-20–Pro-50 is cleaved from the precursor. 3 cysteine pairs are disulfide-bonded: Cys-54/Cys-59, Cys-55/Cys-63, and Cys-58/Cys-66.

This sequence belongs to the heat-stable enterotoxin family.

The protein localises to the secreted. Toxin which activates the particulate form of guanylate cyclase and increases cyclic GMP levels within the host intestinal epithelial cells. The sequence is that of Heat-stable enterotoxin (yst) from Yersinia kristensenii.